The primary structure comprises 419 residues: Tyrosine--tRNA ligase (419 aa).

Tyr-36 serves as a coordination point for L-tyrosine. The 'HIGH' region motif lies at 41-50 (PTGDSMHIGH). L-tyrosine-binding residues include Tyr-168 and Gln-172. The 'KMSKS' region motif lies at 230–234 (KFGKT). Lys-233 contributes to the ATP binding site. In terms of domain architecture, S4 RNA-binding spans 352–419 (KNIVDFLVDA…KKKYFLARVK (68 aa)).

This sequence belongs to the class-I aminoacyl-tRNA synthetase family. TyrS type 1 subfamily. As to quaternary structure, homodimer.

Its subcellular location is the cytoplasm. It catalyses the reaction tRNA(Tyr) + L-tyrosine + ATP = L-tyrosyl-tRNA(Tyr) + AMP + diphosphate + H(+). Its function is as follows. Catalyzes the attachment of tyrosine to tRNA(Tyr) in a two-step reaction: tyrosine is first activated by ATP to form Tyr-AMP and then transferred to the acceptor end of tRNA(Tyr). The sequence is that of Tyrosine--tRNA ligase from Latilactobacillus sakei subsp. sakei (strain 23K) (Lactobacillus sakei subsp. sakei).